The following is a 434-amino-acid chain: Alpha-enolase (434 aa).

S2 carries the N-acetylserine modification. K5 bears the N6-acetyllysine mark. A Phosphoserine modification is found at S27. S40 serves as a coordination point for Mg(2+). At Y44 the chain carries Phosphotyrosine. N6-acetyllysine; alternate is present on K60. K60 bears the N6-succinyllysine; alternate mark. N6-acetyllysine occurs at positions 64 and 71. K89 is subject to N6-acetyllysine; alternate. K89 carries the post-translational modification N6-succinyllysine; alternate. N6-acetyllysine occurs at positions 92 and 126. Residues H158 and E167 each contribute to the substrate site. An N6-acetyllysine mark is found at K193 and K199. Position 202 is an N6-acetyllysine; alternate (K202). Residue K202 forms a Glycyl lysine isopeptide (Lys-Gly) (interchain with G-Cter in SUMO2); alternate linkage. The Proton donor role is filled by E210. N6-acetyllysine; alternate occurs at positions 228 and 233. K228 carries the N6-succinyllysine; alternate modification. K228 carries the post-translational modification N6-(2-hydroxyisobutyryl)lysine; alternate. K233 carries the post-translational modification N6-malonyllysine; alternate. D245 is a binding site for Mg(2+). S254 is subject to Phosphoserine. An N6-acetyllysine modification is found at K256. A phosphoserine mark is found at S263 and S272. K281 bears the N6-acetyllysine; alternate mark. An N6-(2-hydroxyisobutyryl)lysine; alternate modification is found at K281. K285 carries the post-translational modification N6-acetyllysine. Y287 carries the post-translational modification Phosphotyrosine. Phosphoserine is present on S291. Mg(2+) contacts are provided by E293 and D318. Substrate is bound by residues E293 and D318. 2 positions are modified to N6-acetyllysine: K335 and K343. The Proton acceptor role is filled by K343. Residues 370–373 (SHRS) and K394 contribute to the substrate site. Positions 405-434 (AKYNQLLRIEEELGSKAKFAGRNFRNPLAK) are required for interaction with PLG. K406 is subject to N6-acetyllysine. K420 bears the N6-acetyllysine; alternate mark. Position 420 is an N6-succinyllysine; alternate (K420). K420 is modified (N6-malonyllysine; alternate).

Belongs to the enolase family. Mammalian enolase is composed of 3 isozyme subunits, alpha, beta and gamma, which can form homodimers or heterodimers which are cell-type and development-specific. ENO1 interacts with PLG in the neuronal plasma membrane and promotes its activation. The C-terminal lysine is required for this binding. Interacts with ENO4 and PGAM2. Interacts with CMTM6. Mg(2+) is required as a cofactor. ISGylated. Post-translationally, lysine 2-hydroxyisobutyrylation (Khib) by p300/EP300 activates the phosphopyruvate hydratase activity.

It localises to the cytoplasm. Its subcellular location is the cell membrane. The catalysed reaction is (2R)-2-phosphoglycerate = phosphoenolpyruvate + H2O. Its pathway is carbohydrate degradation; glycolysis; pyruvate from D-glyceraldehyde 3-phosphate: step 4/5. Glycolytic enzyme the catalyzes the conversion of 2-phosphoglycerate to phosphoenolpyruvate. In addition to glycolysis, involved in various processes such as growth control, hypoxia tolerance and allergic responses. May also function in the intravascular and pericellular fibrinolytic system due to its ability to serve as a receptor and activator of plasminogen on the cell surface of several cell-types such as leukocytes and neurons. Stimulates immunoglobulin production. The sequence is that of Alpha-enolase (ENO1) from Pongo abelii (Sumatran orangutan).